The chain runs to 71 residues: Large ribosomal subunit protein uL29 (71 aa).

The segment at Gly32–Lys51 is disordered.

Belongs to the universal ribosomal protein uL29 family.

In Methanococcus maripaludis (strain DSM 14266 / JCM 13030 / NBRC 101832 / S2 / LL), this protein is Large ribosomal subunit protein uL29.